The following is an 89-amino-acid chain: uncharacterized protein (89 aa).

This is an uncharacterized protein from Schizosaccharomyces pombe (strain 972 / ATCC 24843) (Fission yeast).